The sequence spans 793 residues: Putative potassium transporter 8 (793 aa).

The Cytoplasmic segment spans residues 1–22; that stretch reads MDLEFGRGMRSPQRDSWKTTLL. Residues 23–43 traverse the membrane as a helical segment; it reads LAYQSLGVVYGDLSISPLYVF. Residues 44 to 59 lie on the Extracellular side of the membrane; sequence KSTFAEDIQHSETNEE. Residues 60–80 form a helical membrane-spanning segment; it reads IFGVLSFVFWTLTLIPLIKYV. The Cytoplasmic segment spans residues 81 to 151; it reads SIVLRADDNG…EKHKKLHTAL (71 aa). Residues 152 to 172 traverse the membrane as a helical segment; sequence LIMVLIGTCMVIGDGVLTPAI. At 173-191 the chain is on the extracellular side; sequence SVFSAVSGLEFSLSKDHRE. Residues 192–212 form a helical membrane-spanning segment; the sequence is YAVIPITCVILAFLFALQHYG. Residues 213 to 215 lie on the Cytoplasmic side of the membrane; it reads THR. The chain crosses the membrane as a helical span at residues 216–236; it reads VGFLFAPIVLAWLICMSALGL. The Extracellular portion of the chain corresponds to 237–264; it reads YNIIHWNPHVYQALNPCYMFKFLKKTRK. Residues 265 to 285 traverse the membrane as a helical segment; it reads YGWMSLGGILLCMTGSEAMFA. The Cytoplasmic segment spans residues 286–292; sequence DLGHFSY. The helical transmembrane segment at 293 to 313 threads the bilayer; sequence SAIQLAFTSLVYPALILAYMG. Topologically, residues 314-343 are extracellular; the sequence is QAAYLSKHHDFYSNSQVGFYIAVPDKVRWP. Residues 344 to 364 traverse the membrane as a helical segment; that stretch reads VLVLAILASVVGSQAIISGTF. Residues 365-391 are Cytoplasmic-facing; sequence SIINQSQSLSCFPRVKVVHTSDKIHGQ. The chain crosses the membrane as a helical span at residues 392 to 412; the sequence is IYIPEINWLLMILCIAVTVGF. Over 413–422 the chain is Extracellular; the sequence is RDTKHMGNAS. Asn-420 is a glycosylation site (N-linked (GlcNAc...) asparagine). A helical membrane pass occupies residues 423 to 443; it reads GLAVITVMLVTTCLTSLVIML. Topologically, residues 444-448 are cytoplasmic; that stretch reads CWRRP. The chain crosses the membrane as a helical span at residues 449 to 469; sequence PVLALCFLLFFGSVEALYFSA. Over 470-473 the chain is Extracellular; sequence SLIK. A helical transmembrane segment spans residues 474 to 494; the sequence is FLEGAWLPILLALFLMAVMLV. Topologically, residues 495-793 are cytoplasmic; that stretch reads WHYTTIKKYE…LLEVGMVYVL (299 aa). Positions 664-675 are enriched in polar residues; it reads DSVQHSSAASVE. Positions 664–698 are disordered; the sequence is DSVQHSSAASVETTTTRRRSGGGDDDGSPGGGGGR.

The protein belongs to the HAK/KUP transporter (TC 2.A.72.3) family.

The protein localises to the membrane. Its function is as follows. High-affinity potassium transporter. This is Putative potassium transporter 8 (HAK8) from Oryza sativa subsp. japonica (Rice).